Reading from the N-terminus, the 285-residue chain is Thrombin-like enzyme TLBm (285 aa).

A Peptidase S1 domain is found at 1–273 (VIGGDECNIN…HLDWSQSVIA (273 aa)). Disulfide bonds link cysteine 7–cysteine 181, cysteine 30–cysteine 46, cysteine 94–cysteine 284, cysteine 156–cysteine 234, cysteine 192–cysteine 209, and cysteine 224–cysteine 249. Active-site charge relay system residues include histidine 45 and aspartate 113. Residue serine 228 is the Charge relay system of the active site.

The protein belongs to the peptidase S1 family. Snake venom subfamily. In terms of assembly, monomer. Post-translationally, homologous thrombin-like enzymes are N-glycosylated. This enzyme does not contain the consensus glycosylation sites, suggesting it is not glycosylated. As to expression, expressed by the venom gland.

The protein localises to the secreted. Its activity is regulated as follows. Inhibited by PMSF, disodium-EDTA, S(Dm) and soybean trypsin inhibitor (SBTI). SBTI and S(Dm) (the anti-hemorrhagic protein) acts as a non-competitive inhibitors that decrease the enzymatic activity. Its function is as follows. Thrombin-like enzyme that induces the formation of fibrin clot. Cleaves the Aalpha-chain of fibrinogen (FGA) with higher activity than the Bbeta-chain (FGB). Induces platelet aggregation in both platelet-rich plasma and in washed platelet preparations. This aggregation is strongly inhibited by preincubation of the enzyme with PMSF. This is Thrombin-like enzyme TLBm from Bothrops marajoensis (Marajo lancehead).